Consider the following 351-residue polypeptide: Thiamine-phosphate synthase (351 aa).

The segment at Met-1 to Arg-127 is unknown. Residues Arg-64–Asp-84 are disordered. The thiamine-phosphate synthase stretch occupies residues Val-128–Ser-351. 4-amino-2-methyl-5-(diphosphooxymethyl)pyrimidine contacts are provided by residues Gln-178–Lys-182 and Asn-210. Mg(2+) is bound by residues Asp-211 and Asp-230. 4-amino-2-methyl-5-(diphosphooxymethyl)pyrimidine is bound at residue Ser-249. Thr-275 to Thr-277 serves as a coordination point for 2-[(2R,5Z)-2-carboxy-4-methylthiazol-5(2H)-ylidene]ethyl phosphate. A 4-amino-2-methyl-5-(diphosphooxymethyl)pyrimidine-binding site is contributed by Lys-278. Gly-305 contributes to the 2-[(2R,5Z)-2-carboxy-4-methylthiazol-5(2H)-ylidene]ethyl phosphate binding site.

It belongs to the thiamine-phosphate synthase family. Mg(2+) serves as cofactor.

It catalyses the reaction 2-[(2R,5Z)-2-carboxy-4-methylthiazol-5(2H)-ylidene]ethyl phosphate + 4-amino-2-methyl-5-(diphosphooxymethyl)pyrimidine + 2 H(+) = thiamine phosphate + CO2 + diphosphate. It carries out the reaction 2-(2-carboxy-4-methylthiazol-5-yl)ethyl phosphate + 4-amino-2-methyl-5-(diphosphooxymethyl)pyrimidine + 2 H(+) = thiamine phosphate + CO2 + diphosphate. The catalysed reaction is 4-methyl-5-(2-phosphooxyethyl)-thiazole + 4-amino-2-methyl-5-(diphosphooxymethyl)pyrimidine + H(+) = thiamine phosphate + diphosphate. Its pathway is cofactor biosynthesis; thiamine diphosphate biosynthesis; thiamine phosphate from 4-amino-2-methyl-5-diphosphomethylpyrimidine and 4-methyl-5-(2-phosphoethyl)-thiazole: step 1/1. Condenses 4-methyl-5-(beta-hydroxyethyl)thiazole monophosphate (THZ-P) and 2-methyl-4-amino-5-hydroxymethyl pyrimidine pyrophosphate (HMP-PP) to form thiamine monophosphate (TMP). The chain is Thiamine-phosphate synthase from Thermosynechococcus vestitus (strain NIES-2133 / IAM M-273 / BP-1).